The chain runs to 436 residues: Probable G-protein coupled receptor C06G4.5 (436 aa).

Residues 1–53 (MSTNLVDYVDDSYLNQSMNSENGLDSVTQIMYDMKKYNIVNDVLPPPNHEDLH) are Extracellular-facing. The N-linked (GlcNAc...) asparagine glycan is linked to Asn15. The chain crosses the membrane as a helical span at residues 54–74 (VVIMAVSYLLLFLLGTCGNVA). Residues 75-94 (VLTTIYHVIRSSRATLDNTL) are Cytoplasmic-facing. Residues 95–115 (IYVIVLSCVDFGVCLSLPITV) traverse the membrane as a helical segment. Residues 116-132 (IDQILGFWMFGKIPCKL) lie on the Extracellular side of the membrane. Residues 133 to 153 (HAVFENFGKILSALILTAMSF) traverse the membrane as a helical segment. The Cytoplasmic portion of the chain corresponds to 154 to 171 (DRYAGVCHPQRKRLRSRN). Residues 172-192 (FAITILLVLAVYAFITLCPLL) form a helical membrane-spanning segment. Residues 193 to 230 (WSFTAREIILYAKETAPGMLTRMKIEKCTVDIDSQMFT) lie on the Extracellular side of the membrane. A helical membrane pass occupies residues 231-251 (AFTIYQFILCYCTPLVLIAFF). Residues 252 to 281 (YTKLLSKLREHTRTFKSSQIPFLHISLYTL) are Cytoplasmic-facing. The chain crosses the membrane as a helical span at residues 282-302 (AVACFYFLCWTPFWMATLFAV). Over 303–316 (YLENSANSSSVPPV) the chain is Extracellular. Residue Asn309 is glycosylated (N-linked (GlcNAc...) asparagine). The chain crosses the membrane as a helical span at residues 317–337 (FVYIMYFIHALPFTNSAINWI). Residues 338–436 (LYGALNGQLQ…LLSNHNPTFL (99 aa)) lie on the Cytoplasmic side of the membrane.

The protein belongs to the G-protein coupled receptor 1 family.

The protein localises to the cell membrane. Putative receptor. The polypeptide is Probable G-protein coupled receptor C06G4.5 (Caenorhabditis elegans).